Consider the following 660-residue polypeptide: Bifunctional polymyxin resistance protein ArnA (660 aa).

A formyltransferase ArnAFT region spans residues 1-304 (MKAVIFAYHD…ALGLVKGALL (304 aa)). Catalysis depends on His-104, which acts as the Proton donor; for formyltransferase activity. Residues Arg-114 and 136 to 140 (TARAD) contribute to the (6R)-10-formyltetrahydrofolate site. The interval 314–660 (RRTRVLILGV…QTVDLPDAAQ (347 aa)) is dehydrogenase ArnADH. NAD(+)-binding positions include Asp-347 and 368 to 369 (DI). UDP-alpha-D-glucuronate-binding positions include Ala-393, Tyr-398, and 432 to 433 (TS). The active-site Proton acceptor; for decarboxylase activity is Glu-434. UDP-alpha-D-glucuronate-binding positions include Arg-460, Asn-492, 526–535 (KLVDGGAQKR), and Tyr-613. Catalysis depends on Arg-619, which acts as the Proton donor; for decarboxylase activity.

It in the N-terminal section; belongs to the Fmt family. UDP-L-Ara4N formyltransferase subfamily. This sequence in the C-terminal section; belongs to the NAD(P)-dependent epimerase/dehydratase family. UDP-glucuronic acid decarboxylase subfamily. As to quaternary structure, homohexamer, formed by a dimer of trimers.

It catalyses the reaction UDP-alpha-D-glucuronate + NAD(+) = UDP-beta-L-threo-pentopyranos-4-ulose + CO2 + NADH. The enzyme catalyses UDP-4-amino-4-deoxy-beta-L-arabinose + (6R)-10-formyltetrahydrofolate = UDP-4-deoxy-4-formamido-beta-L-arabinose + (6S)-5,6,7,8-tetrahydrofolate + H(+). It functions in the pathway nucleotide-sugar biosynthesis; UDP-4-deoxy-4-formamido-beta-L-arabinose biosynthesis; UDP-4-deoxy-4-formamido-beta-L-arabinose from UDP-alpha-D-glucuronate: step 1/3. The protein operates within nucleotide-sugar biosynthesis; UDP-4-deoxy-4-formamido-beta-L-arabinose biosynthesis; UDP-4-deoxy-4-formamido-beta-L-arabinose from UDP-alpha-D-glucuronate: step 3/3. It participates in bacterial outer membrane biogenesis; lipopolysaccharide biosynthesis. Bifunctional enzyme that catalyzes the oxidative decarboxylation of UDP-glucuronic acid (UDP-GlcUA) to UDP-4-keto-arabinose (UDP-Ara4O) and the addition of a formyl group to UDP-4-amino-4-deoxy-L-arabinose (UDP-L-Ara4N) to form UDP-L-4-formamido-arabinose (UDP-L-Ara4FN). The modified arabinose is attached to lipid A and is required for resistance to polymyxin and cationic antimicrobial peptides. The protein is Bifunctional polymyxin resistance protein ArnA of Sodalis glossinidius (strain morsitans).